The primary structure comprises 500 residues: NAD(P)H-quinone oxidoreductase chain 4, chloroplastic (500 aa).

14 helical membrane passes run phenylalanine 4–leucine 24, leucine 31–phenylalanine 51, isoleucine 87–valine 107, leucine 113–serine 130, leucine 134–methionine 154, phenylalanine 167–leucine 187, alanine 208–isoleucine 228, histidine 242–valine 262, alanine 272–alanine 292, isoleucine 305–aspartate 325, glycine 330–glycine 350, leucine 386–threonine 406, isoleucine 416–methionine 436, and leucine 462–valine 482.

This sequence belongs to the complex I subunit 4 family.

It localises to the plastid. It is found in the chloroplast thylakoid membrane. The catalysed reaction is a plastoquinone + NADH + (n+1) H(+)(in) = a plastoquinol + NAD(+) + n H(+)(out). The enzyme catalyses a plastoquinone + NADPH + (n+1) H(+)(in) = a plastoquinol + NADP(+) + n H(+)(out). This Gossypium barbadense (Sea Island cotton) protein is NAD(P)H-quinone oxidoreductase chain 4, chloroplastic.